The following is a 579-amino-acid chain: Proline--tRNA ligase (579 aa).

Belongs to the class-II aminoacyl-tRNA synthetase family. ProS type 1 subfamily. As to quaternary structure, homodimer.

The protein resides in the cytoplasm. It carries out the reaction tRNA(Pro) + L-proline + ATP = L-prolyl-tRNA(Pro) + AMP + diphosphate. Catalyzes the attachment of proline to tRNA(Pro) in a two-step reaction: proline is first activated by ATP to form Pro-AMP and then transferred to the acceptor end of tRNA(Pro). As ProRS can inadvertently accommodate and process non-cognate amino acids such as alanine and cysteine, to avoid such errors it has two additional distinct editing activities against alanine. One activity is designated as 'pretransfer' editing and involves the tRNA(Pro)-independent hydrolysis of activated Ala-AMP. The other activity is designated 'posttransfer' editing and involves deacylation of mischarged Ala-tRNA(Pro). The misacylated Cys-tRNA(Pro) is not edited by ProRS. The protein is Proline--tRNA ligase of Hamiltonella defensa subsp. Acyrthosiphon pisum (strain 5AT).